A 743-amino-acid chain; its full sequence is MLKQFTHYCEMQAELIPEGPNGEGRLSNQNSNPNLLSSASISITQFPAKKPTRQWAAWTHQEEESFFTALRQVGKNFEKITSRVQSKNKDQVRHYYYRLVRRMNKLLGPDLSLDAKNPKDTNAAMLRWWSLLEKYSCKASKLHLKPRRFKLFIEALEHQLLKDRRKSIRKRTCQGENLSSASLGNISSHSRERGLDNRPFKLILSDGQNVKKLGPGRASTKHGESLSVNLGDEKEDTAFGRGGRQRRKQGYRKWEKAAIDGVSLVADAAEHLERTSIDKDMDDQTDLGPTRYLTGKSPLSLCSAGDVPLSDANMQFSAKLKLQLFPIDECTRRSLEMDKHNPHLELTLSNRKKISSVLEHLNRKWGSSSCATGELLLFPYNARKETVTCHQRWTHDSFLSAAEVHSMVGSPSVFRLRYGWFVHDASGSIISQVPTSDPCPSLEDDMNVDRLNEVNMLLTESGPLSVHSTAEQTTSVEPSQGLVCASGVHDRPARSRDDYEPASTSITPLEHLSGGNAQSPGEWADSLTNISIGDLLSEVPDDIDSDGVDPPATEGSHYLLRDVPFTSDSFDAAIAAHILRHQNKPSAQLPLTSGSSSLWDDEETRDAFSFQKNRFANSTELASVASPKGVGRVNGEPSQLVEASSGDEGSYNPHDDGDPMEEGPADPHTMDSPGKTPCGLADVYWPDSLGPLDLDIRSSKYTDDLILSESLGGLSRLIATSLDAFQNCSLFGFDNKKDKSNMV.

The SANT domain occupies R53–N104. 2 disordered regions span residues S486–W523 and S626–G679. Basic and acidic residues predominate over residues V488 to Y499.

Interacts only with active kinase forms of TOUSLED. Interacts with SNL1. Phosphorylated in vitro by TOUSLED. In terms of tissue distribution, expressed in flowers, roots and leaves.

Its subcellular location is the nucleus. This Arabidopsis thaliana (Mouse-ear cress) protein is TSL-kinase interacting protein 1 (TKI1).